The following is a 290-amino-acid chain: Lipid phosphate phosphatase 2 (290 aa).

A run of 3 helical transmembrane segments spans residues 26–46 (WLILLLLIVIEIVLNVIEPFH), 69–89 (WAVPLIAVVLPFAVICVYYFI), and 93–113 (VYDLHHAILGLLFSVLITGVI). N-linked (GlcNAc...) asparagine glycosylation is present at Asn-142. 3 helical membrane-spanning segments follow: residues 162–182 (SFPSGHTSWSFAGLGFLSLYL), 193–213 (GHVAKLCIVILPLLVAALVGV), and 226–246 (VFGGAIIGLTVATFCYLQFFP).

Belongs to the PA-phosphatase related phosphoesterase family. Expressed in roots, stems, leaves, buds, flowers and siliques.

The protein localises to the membrane. Its activity is regulated as follows. PA phosphatase activity not inhibited by N-ethylmaleimide. May play a general 'housekeeping role' in lipid metabolism. Exhibits both diacylglycerol pyrophosphate (DGPP) phosphatase and phosphatidate (PA) phosphatase activities with no preference for either substrate. May play a role downstream of the ABA signaling pathway during seed germination and in stomatal movement in leaves. In Arabidopsis thaliana (Mouse-ear cress), this protein is Lipid phosphate phosphatase 2 (LPP2).